Here is a 33-residue protein sequence, read N- to C-terminus: Photosystem II reaction center protein Psb30 (33 aa).

A helical transmembrane segment spans residues 5–25 (LALTLVSLVLVVSAGPLVVVL).

Belongs to the Psb30/Ycf12 family. In terms of assembly, PSII is composed of 1 copy each of membrane proteins PsbA, PsbB, PsbC, PsbD, PsbE, PsbF, PsbH, PsbI, PsbJ, PsbK, PsbL, PsbM, PsbT, PsbX, PsbY, PsbZ, Psb30/Ycf12, peripheral proteins of the oxygen-evolving complex and a large number of cofactors. It forms dimeric complexes.

The protein localises to the plastid. It is found in the chloroplast thylakoid membrane. In terms of biological role, a core subunit of photosystem II (PSII), required for optimal photosynthesis, probably helps stabilize the reaction center. The sequence is that of Photosystem II reaction center protein Psb30 from Chlamydomonas reinhardtii (Chlamydomonas smithii).